Here is a 242-residue protein sequence, read N- to C-terminus: Probable transcriptional regulatory protein EF_0663 (242 aa).

Over residues 1 to 14 (MSGHSKWSNIQGRK) the composition is skewed to polar residues. Residues 1–22 (MSGHSKWSNIQGRKNAQDAKRG) are disordered.

It belongs to the TACO1 family.

The protein resides in the cytoplasm. The protein is Probable transcriptional regulatory protein EF_0663 of Enterococcus faecalis (strain ATCC 700802 / V583).